Reading from the N-terminus, the 279-residue chain is Pantothenate synthetase (279 aa).

26-33 (MGNLHEGH) serves as a coordination point for ATP. The active-site Proton donor is His-33. A (R)-pantoate-binding site is contributed by Gln-57. Gln-57 lines the beta-alanine pocket. ATP is bound at residue 144 to 147 (GKKD). Residue Gln-150 participates in (R)-pantoate binding. ATP is bound by residues Val-173 and 181-184 (LSSR).

Belongs to the pantothenate synthetase family. In terms of assembly, homodimer.

The protein resides in the cytoplasm. The enzyme catalyses (R)-pantoate + beta-alanine + ATP = (R)-pantothenate + AMP + diphosphate + H(+). It functions in the pathway cofactor biosynthesis; (R)-pantothenate biosynthesis; (R)-pantothenate from (R)-pantoate and beta-alanine: step 1/1. Functionally, catalyzes the condensation of pantoate with beta-alanine in an ATP-dependent reaction via a pantoyl-adenylate intermediate. This chain is Pantothenate synthetase, found in Burkholderia cenocepacia (strain ATCC BAA-245 / DSM 16553 / LMG 16656 / NCTC 13227 / J2315 / CF5610) (Burkholderia cepacia (strain J2315)).